Here is a 202-residue protein sequence, read N- to C-terminus: Glycerol-3-phosphate acyltransferase (202 aa).

6 helical membrane-spanning segments follow: residues 3–23 (NLIIYAFIYLLGSIPFGLILA), 61–81 (IATIILDFAKAAIPLLILKFL), 87–107 (LLWSVAVLAIFGHCFSIYLLF), 118–138 (GAMIVLLPLEVLTAFIVWVVI), 144–164 (ISSLASLAALLAFVISSFIFN), and 167–187 (LEIHTHAPVFIIAFIIVYKHL).

It belongs to the PlsY family. Probably interacts with PlsX.

It is found in the cell inner membrane. It carries out the reaction an acyl phosphate + sn-glycerol 3-phosphate = a 1-acyl-sn-glycero-3-phosphate + phosphate. It functions in the pathway lipid metabolism; phospholipid metabolism. Functionally, catalyzes the transfer of an acyl group from acyl-phosphate (acyl-PO(4)) to glycerol-3-phosphate (G3P) to form lysophosphatidic acid (LPA). This enzyme utilizes acyl-phosphate as fatty acyl donor, but not acyl-CoA or acyl-ACP. This Campylobacter jejuni subsp. jejuni serotype O:6 (strain 81116 / NCTC 11828) protein is Glycerol-3-phosphate acyltransferase.